Reading from the N-terminus, the 129-residue chain is Snaclec coagulation factor IX-binding protein subunit A (129 aa).

The 129-residue stretch at 1–129 (DCPSGWSSYE…GQQNPFVCEA (129 aa)) folds into the C-type lectin domain. 3 disulfide bridges follow: cysteine 2-cysteine 13, cysteine 30-cysteine 127, and cysteine 102-cysteine 119. Ca(2+) contacts are provided by serine 41, glutamate 43, and glutamate 47. Glutamate 128 contributes to the Ca(2+) binding site.

The protein belongs to the snaclec family. In terms of assembly, heterodimer of subunits A and B; disulfide-linked. Expressed by the venom gland.

The protein resides in the secreted. Its function is as follows. Anticoagulant protein which binds to the gamma-carboxyglutamic acid-domain regions of factor IX (F9) (but not factor X) in the presence of calcium with a 1 to 1 stoichiometry. The protein is Snaclec coagulation factor IX-binding protein subunit A of Protobothrops flavoviridis (Habu).